Reading from the N-terminus, the 64-residue chain is Prokaryotic ubiquitin-like protein Pup (64 aa).

The tract at residues 1-36 is disordered; that stretch reads MAQEQTKRGGGGGDDEDVTGTTAAGQERRKKLAQDT. Positions 21 to 58 are ARC ATPase binding; it reads TTAAGQERRKKLAQDTDDLLDEIDDVLEENAEDFVRAY. Residues 26-52 adopt a coiled-coil conformation; that stretch reads QERRKKLAQDTDDLLDEIDDVLEENAE. A Deamidated glutamine modification is found at glutamine 64. Residue glutamine 64 forms an Isoglutamyl lysine isopeptide (Gln-Lys) (interchain with K-? in acceptor proteins) linkage.

This sequence belongs to the prokaryotic ubiquitin-like protein family. In terms of assembly, strongly interacts with the proteasome-associated ATPase ARC through a hydrophobic interface; the interacting region of Pup lies in its C-terminal half. There is one Pup binding site per ARC hexamer ring. Is modified by deamidation of its C-terminal glutamine to glutamate by the deamidase Dop, a prerequisite to the subsequent pupylation process.

It participates in protein degradation; proteasomal Pup-dependent pathway. Its function is as follows. Protein modifier that is covalently attached to lysine residues of substrate proteins, thereby targeting them for proteasomal degradation. The tagging system is termed pupylation. The chain is Prokaryotic ubiquitin-like protein Pup from Mycobacterium ulcerans (strain Agy99).